We begin with the raw amino-acid sequence, 311 residues long: MENLQLVLFVLGAIAIIAVLVHGFWSIRKQQPKSLKESPMSGFYKDQASVRDSQGFDADGIGEVRVRKEVPATDRQEKEDKPVQEPAFTAAPSRDVEDSRHEQAFALSDEPVQRAARQRQEPVLSMGANAKDDEVQMELGLGQDSQSSLFETVEQESVVEPTPEPEVKAEEPLGEPKDVLVLHVVANEGEELNGAELLPCLLSLNFKFGDMDIFHRHEDNAGTGKVLFSLANMVKPGVFNLDNMEQFTTEGVVLFMTLPCHGDPLMNFSIMLNSAHQLADDVGGRLLDGGREDWSESTKQLYLQRIRAQLD.

The Periplasmic portion of the chain corresponds to 1-6; it reads MENLQL. The chain crosses the membrane as a helical span at residues 7–27; the sequence is VLFVLGAIAIIAVLVHGFWSI. Over 28-311 the chain is Cytoplasmic; the sequence is RKQQPKSLKE…YLQRIRAQLD (284 aa). The tract at residues 46–114 is disordered; that stretch reads DQASVRDSQG…FALSDEPVQR (69 aa). 2 stretches are compositionally biased toward basic and acidic residues: residues 62-83 and 94-103; these read GEVR…DKPV and RDVEDSRHEQ.

It belongs to the ZipA family. In terms of assembly, interacts with FtsZ via their C-terminal domains.

The protein resides in the cell inner membrane. Functionally, essential cell division protein that stabilizes the FtsZ protofilaments by cross-linking them and that serves as a cytoplasmic membrane anchor for the Z ring. Also required for the recruitment to the septal ring of downstream cell division proteins. The protein is Cell division protein ZipA of Shewanella woodyi (strain ATCC 51908 / MS32).